The following is a 526-amino-acid chain: Transcription factor kayak (526 aa).

Disordered stretches follow at residues 71 to 165 (PPLA…GTGG) and 178 to 221 (RNTN…NKQA). Composition is skewed to low complexity over residues 78–87 (NNNNNNNNNG) and 133–153 (ISDT…HMMG). Gly residues predominate over residues 154–165 (NSGGGNGGGTGG). Polar residues predominate over residues 178–187 (RNTNTSNSAT). Residues 208 to 271 (EEKRRIRRER…NQLEYFLQAH (64 aa)) enclose the bZIP domain. Residues 210–229 (KRRIRRERNKQAAARCRKRR) are basic motif. The segment at 236–264 (LTEEVELLEKRGENLKKEMELLNETKNQL) is leucine-zipper. The segment covering 301–322 (GSCGSGSSHHNNNSNSNDSSSG) has biased composition (low complexity). 2 disordered regions span residues 301-345 (GSCG…DLKP) and 504-526 (TSQN…LVSL). The span at 330–340 (TLNSTGRSNSP) shows a compositional bias: polar residues. A Phosphoserine modification is found at S339.

Belongs to the bZIP family. Fos subfamily. Homodimer. Heterodimer with Jra. The kay-Jra heterodimer binds more stably to the AP-1 site than either of the two proteins alone.

It localises to the nucleus. Developmentally regulated transcription factor AP-1 binds and recognizes the enhancer DNA sequence: 5'-TGA[CG]TCA-3'. May play a role in the function or determination of a particular subset of cells in the developing embryo. It is able to carry out its function either independently of or in conjunction with Jra. In Drosophila persimilis (Fruit fly), this protein is Transcription factor kayak.